The chain runs to 440 residues: Protein disulfide-isomerase 2-3 (440 aa).

The N-terminal stretch at Met1–Ala24 is a signal peptide. 2 consecutive Thioredoxin domains span residues Leu25–Lys136 and Ser154–Glu269. Active-site nucleophile residues include Cys60 and Cys63. A disulfide bond links Cys60 and Cys63. Residues Leu143–Ala163 form a disordered region. Residue Asn168 is glycosylated (N-linked (GlcNAc...) asparagine). Residues Cys192 and Cys195 each act as nucleophile in the active site. The cysteines at positions 192 and 195 are disulfide-linked. A Prevents secretion from ER motif is present at residues Lys437 to Leu440.

Belongs to the protein disulfide isomerase family. In terms of tissue distribution, widely expressed.

It localises to the endoplasmic reticulum lumen. It carries out the reaction Catalyzes the rearrangement of -S-S- bonds in proteins.. Functionally, acts as a protein-folding catalyst that interacts with nascent polypeptides to catalyze the formation, isomerization, and reduction or oxidation of disulfide bonds. The sequence is that of Protein disulfide-isomerase 2-3 (PDIL2-3) from Arabidopsis thaliana (Mouse-ear cress).